Consider the following 361-residue polypeptide: Chorismate synthase (361 aa).

The NADP(+) site is built by Arg-48 and Arg-54. FMN is bound by residues 125-127 (RSS), 238-239 (NA), Gly-278, 293-297 (KPTSS), and Arg-319.

Belongs to the chorismate synthase family. As to quaternary structure, homotetramer. FMNH2 is required as a cofactor.

It carries out the reaction 5-O-(1-carboxyvinyl)-3-phosphoshikimate = chorismate + phosphate. Its pathway is metabolic intermediate biosynthesis; chorismate biosynthesis; chorismate from D-erythrose 4-phosphate and phosphoenolpyruvate: step 7/7. Its function is as follows. Catalyzes the anti-1,4-elimination of the C-3 phosphate and the C-6 proR hydrogen from 5-enolpyruvylshikimate-3-phosphate (EPSP) to yield chorismate, which is the branch point compound that serves as the starting substrate for the three terminal pathways of aromatic amino acid biosynthesis. This reaction introduces a second double bond into the aromatic ring system. The chain is Chorismate synthase from Vibrio parahaemolyticus serotype O3:K6 (strain RIMD 2210633).